The primary structure comprises 483 residues: UDP-N-acetylmuramate--L-alanine ligase (483 aa).

122-128 (GSHGKTT) serves as a coordination point for ATP.

Belongs to the MurCDEF family.

Its subcellular location is the cytoplasm. It carries out the reaction UDP-N-acetyl-alpha-D-muramate + L-alanine + ATP = UDP-N-acetyl-alpha-D-muramoyl-L-alanine + ADP + phosphate + H(+). It functions in the pathway cell wall biogenesis; peptidoglycan biosynthesis. In terms of biological role, cell wall formation. The chain is UDP-N-acetylmuramate--L-alanine ligase from Synechococcus sp. (strain CC9311).